The chain runs to 693 residues: A disintegrin and metalloproteinase with thrombospondin motifs like (693 aa).

The N-terminal stretch at 1-24 (MESSVATHWLSAFVILCSFITTQS) is a signal peptide. Residues 67 to 80 (IPTSHPANSNSADS) show a composition bias toward polar residues. The interval 67–91 (IPTSHPANSNSADSGKTPHLKTEKV) is disordered. 2 N-linked (GlcNAc...) asparagine glycosylation sites follow: Asn-124 and Asn-194. One can recognise a Peptidase M12B domain in the interval 353–585 (IYPEILVIVD…DTATCLYNSP (233 aa)). Intrachain disulfides connect Cys-485-Cys-580 and Cys-541-Cys-564. His-514 is a binding site for Zn(2+). Residues 514–525 (HEVGHLLGAVHD) carry the Metal-binding motif. The active site involves Glu-515. His-518 and His-524 together coordinate Zn(2+). Residue Asn-687 is glycosylated (N-linked (GlcNAc...) asparagine).

The cofactor is Zn(2+).

The protein localises to the secreted. It localises to the extracellular space. The protein resides in the extracellular matrix. Involved in larval molting and metamorphosis. May degrade extracellular matrix (ECM) and basement membrane (BM) during the development of organs to allow degeneration and remodeling of tissues. This is A disintegrin and metalloproteinase with thrombospondin motifs like from Bombyx mori (Silk moth).